The following is a 604-amino-acid chain: Afamin (604 aa).

A signal peptide spans 1–21 (MKQLKLTGFVIFFFFLTESLT). 3 consecutive Albumin domains span residues 22 to 210 (LPTQ…EPFI), 211 to 403 (YYLK…RFNE), and 404 to 598 (TTEK…PKLA). 17 disulfides stabilise this stretch: Cys-77/Cys-86, Cys-99/Cys-114, Cys-113/Cys-124, Cys-148/Cys-193, Cys-192/Cys-201, Cys-224/Cys-270, Cys-269/Cys-277, Cys-289/Cys-303, Cys-302/Cys-313, Cys-340/Cys-385, Cys-384/Cys-393, Cys-416/Cys-462, Cys-461/Cys-470, Cys-483/Cys-499, Cys-498/Cys-509, Cys-536/Cys-581, and Cys-580/Cys-589. Asn-109 is a glycosylation site (N-linked (GlcNAc...) asparagine). A binding pocket for hydrophobic ligands region spans residues 215-319 (ALSSYQKNAC…RGECIIYSNK (105 aa)). Residue Asn-434 is glycosylated (N-linked (GlcNAc...) asparagine).

Belongs to the ALB/AFP/VDB family. In terms of assembly, forms a 1:1 complex with Wnt family members; interacts with WNT3A and WNT5A. Interacts with WNT1, WNT2B, WNT3, WNT7A, WNT7B, WNT8, WNT9A, WNT9B, WNT10A and WNT10B. Post-translationally, N-glycosylated; more than 90% of the glycans are sialylated.

The protein resides in the secreted. Its function is as follows. Functions as a carrier for hydrophobic molecules in body fluids. Essential for the solubility and activity of lipidated Wnt family members, including WNT1, WNT2B, WNT3, WNT3A, WNT5A, WNT7A, WNT7B, WNT8, WNT9A, WNT9B, WNT10A and WNT10B. Binds vitamin E. May transport vitamin E in body fluids under conditions where the lipoprotein system is not sufficient. May be involved in the transport of vitamin E across the blood-brain barrier. This Bos taurus (Bovine) protein is Afamin (AFM).